We begin with the raw amino-acid sequence, 270 residues long: Ribonuclease HII (270 aa).

Positions 84–270 (RYIAGVDEVG…HRNSFLTKLL (187 aa)) constitute an RNase H type-2 domain. Positions 90, 91, and 186 each coordinate a divalent metal cation.

This sequence belongs to the RNase HII family. Requires Mn(2+) as cofactor. It depends on Mg(2+) as a cofactor.

It localises to the cytoplasm. The catalysed reaction is Endonucleolytic cleavage to 5'-phosphomonoester.. Endonuclease that specifically degrades the RNA of RNA-DNA hybrids. The polypeptide is Ribonuclease HII (Clostridium beijerinckii (strain ATCC 51743 / NCIMB 8052) (Clostridium acetobutylicum)).